The following is a 156-amino-acid chain: ATP synthase subunit b (156 aa).

The chain crosses the membrane as a helical span at residues 7–27; sequence LIGQAIWFALFVFFCMKFVWP.

The protein belongs to the ATPase B chain family. As to quaternary structure, F-type ATPases have 2 components, F(1) - the catalytic core - and F(0) - the membrane proton channel. F(1) has five subunits: alpha(3), beta(3), gamma(1), delta(1), epsilon(1). F(0) has three main subunits: a(1), b(2) and c(10-14). The alpha and beta chains form an alternating ring which encloses part of the gamma chain. F(1) is attached to F(0) by a central stalk formed by the gamma and epsilon chains, while a peripheral stalk is formed by the delta and b chains.

The protein resides in the cell inner membrane. F(1)F(0) ATP synthase produces ATP from ADP in the presence of a proton or sodium gradient. F-type ATPases consist of two structural domains, F(1) containing the extramembraneous catalytic core and F(0) containing the membrane proton channel, linked together by a central stalk and a peripheral stalk. During catalysis, ATP synthesis in the catalytic domain of F(1) is coupled via a rotary mechanism of the central stalk subunits to proton translocation. In terms of biological role, component of the F(0) channel, it forms part of the peripheral stalk, linking F(1) to F(0). This chain is ATP synthase subunit b, found in Alcanivorax borkumensis (strain ATCC 700651 / DSM 11573 / NCIMB 13689 / SK2).